A 209-amino-acid chain; its full sequence is Uracil phosphoribosyltransferase (209 aa).

5-phospho-alpha-D-ribose 1-diphosphate contacts are provided by residues Arg-79, Arg-104, and 131–139 (DPMLATGGS). Uracil is bound by residues Ile-194 and 199–201 (GDA). Asp-200 serves as a coordination point for 5-phospho-alpha-D-ribose 1-diphosphate.

It belongs to the UPRTase family. Requires Mg(2+) as cofactor.

The enzyme catalyses UMP + diphosphate = 5-phospho-alpha-D-ribose 1-diphosphate + uracil. It functions in the pathway pyrimidine metabolism; UMP biosynthesis via salvage pathway; UMP from uracil: step 1/1. Allosterically activated by GTP. Catalyzes the conversion of uracil and 5-phospho-alpha-D-ribose 1-diphosphate (PRPP) to UMP and diphosphate. This chain is Uracil phosphoribosyltransferase, found in Listeria innocua serovar 6a (strain ATCC BAA-680 / CLIP 11262).